The following is a 201-amino-acid chain: Putative manganese efflux pump MntP 2 (201 aa).

6 consecutive transmembrane segments (helical) span residues 3 to 23 (LISV…VSIT), 39 to 59 (IGLF…SIGI), 65 to 85 (IAAL…GKMI), 116 to 136 (LILL…SFAF), 141 to 161 (IINT…IGVM), and 176 to 196 (ILGG…HTNI).

This sequence belongs to the MntP (TC 9.B.29) family.

Its subcellular location is the cell membrane. Probably functions as a manganese efflux pump. This chain is Putative manganese efflux pump MntP 2, found in Clostridium botulinum (strain Langeland / NCTC 10281 / Type F).